The sequence spans 345 residues: Phosphoribosylformylglycinamidine cyclo-ligase (345 aa).

The protein belongs to the AIR synthase family.

It localises to the cytoplasm. It carries out the reaction 2-formamido-N(1)-(5-O-phospho-beta-D-ribosyl)acetamidine + ATP = 5-amino-1-(5-phospho-beta-D-ribosyl)imidazole + ADP + phosphate + H(+). Its pathway is purine metabolism; IMP biosynthesis via de novo pathway; 5-amino-1-(5-phospho-D-ribosyl)imidazole from N(2)-formyl-N(1)-(5-phospho-D-ribosyl)glycinamide: step 2/2. The polypeptide is Phosphoribosylformylglycinamidine cyclo-ligase (Shewanella putrefaciens (strain CN-32 / ATCC BAA-453)).